Consider the following 236-residue polypeptide: Pyridoxine 5'-phosphate synthase (236 aa).

N6 is a binding site for 3-amino-2-oxopropyl phosphate. A 1-deoxy-D-xylulose 5-phosphate-binding site is contributed by 8-9; sequence DH. R17 is a binding site for 3-amino-2-oxopropyl phosphate. H42 acts as the Proton acceptor in catalysis. R44 and H49 together coordinate 1-deoxy-D-xylulose 5-phosphate. E69 (proton acceptor) is an active-site residue. T99 is a 1-deoxy-D-xylulose 5-phosphate binding site. H190 serves as the catalytic Proton donor. Residues G191 and 212-213 each bind 3-amino-2-oxopropyl phosphate; that span reads GH.

This sequence belongs to the PNP synthase family. Homooctamer; tetramer of dimers.

The protein localises to the cytoplasm. The enzyme catalyses 3-amino-2-oxopropyl phosphate + 1-deoxy-D-xylulose 5-phosphate = pyridoxine 5'-phosphate + phosphate + 2 H2O + H(+). It participates in cofactor biosynthesis; pyridoxine 5'-phosphate biosynthesis; pyridoxine 5'-phosphate from D-erythrose 4-phosphate: step 5/5. Functionally, catalyzes the complicated ring closure reaction between the two acyclic compounds 1-deoxy-D-xylulose-5-phosphate (DXP) and 3-amino-2-oxopropyl phosphate (1-amino-acetone-3-phosphate or AAP) to form pyridoxine 5'-phosphate (PNP) and inorganic phosphate. The sequence is that of Pyridoxine 5'-phosphate synthase from Pelodictyon phaeoclathratiforme (strain DSM 5477 / BU-1).